Reading from the N-terminus, the 197-residue chain is UPF0301 protein Adeh_3962 (197 aa).

Belongs to the UPF0301 (AlgH) family.

The polypeptide is UPF0301 protein Adeh_3962 (Anaeromyxobacter dehalogenans (strain 2CP-C)).